Reading from the N-terminus, the 303-residue chain is Quinolinate synthase (303 aa).

Iminosuccinate-binding residues include H24 and S41. C86 contributes to the [4Fe-4S] cluster binding site. Iminosuccinate is bound by residues 112–114 (YVN) and S129. Residue C172 coordinates [4Fe-4S] cluster. Residues 198–200 (HPE) and T215 each bind iminosuccinate. C260 serves as a coordination point for [4Fe-4S] cluster.

The protein belongs to the quinolinate synthase family. Type 2 subfamily. The cofactor is [4Fe-4S] cluster.

It localises to the cytoplasm. The enzyme catalyses iminosuccinate + dihydroxyacetone phosphate = quinolinate + phosphate + 2 H2O + H(+). Its pathway is cofactor biosynthesis; NAD(+) biosynthesis; quinolinate from iminoaspartate: step 1/1. Catalyzes the condensation of iminoaspartate with dihydroxyacetone phosphate to form quinolinate. This is Quinolinate synthase from Clostridium kluyveri (strain NBRC 12016).